Consider the following 648-residue polypeptide: Threonine--tRNA ligase (648 aa).

Residues 1 to 61 (MINITFPDGA…DTDGSIEIVT (61 aa)) form the TGS domain. Residues 242–540 (DHRKLGKELD…LIETYKGAFP (299 aa)) form a catalytic region. Positions 336, 387, and 517 each coordinate Zn(2+).

It belongs to the class-II aminoacyl-tRNA synthetase family. In terms of assembly, homodimer. Requires Zn(2+) as cofactor.

It is found in the cytoplasm. The catalysed reaction is tRNA(Thr) + L-threonine + ATP = L-threonyl-tRNA(Thr) + AMP + diphosphate + H(+). Catalyzes the attachment of threonine to tRNA(Thr) in a two-step reaction: L-threonine is first activated by ATP to form Thr-AMP and then transferred to the acceptor end of tRNA(Thr). Also edits incorrectly charged L-seryl-tRNA(Thr). The sequence is that of Threonine--tRNA ligase from Streptococcus uberis (strain ATCC BAA-854 / 0140J).